We begin with the raw amino-acid sequence, 1373 residues long: DNA-directed RNA polymerase subunit beta (1373 aa).

It belongs to the RNA polymerase beta chain family. As to quaternary structure, the RNAP catalytic core consists of 2 alpha, 1 beta, 1 beta' and 1 omega subunit. When a sigma factor is associated with the core the holoenzyme is formed, which can initiate transcription.

The enzyme catalyses RNA(n) + a ribonucleoside 5'-triphosphate = RNA(n+1) + diphosphate. Its function is as follows. DNA-dependent RNA polymerase catalyzes the transcription of DNA into RNA using the four ribonucleoside triphosphates as substrates. The polypeptide is DNA-directed RNA polymerase subunit beta (Rickettsia conorii (strain ATCC VR-613 / Malish 7)).